Reading from the N-terminus, the 201-residue chain is Myelomonocytic growth factor (201 aa).

Positions 1–23 (MCCLTPVLALALVLGAPWQALHG) are cleaved as a signal peptide. Cystine bridges form between Cys-61/Cys-67 and Cys-89/Cys-99. Asn-123 and Asn-137 each carry an N-linked (GlcNAc...) asparagine glycan.

The protein belongs to the IL-6 superfamily.

The protein localises to the secreted. Its function is as follows. Hematopoietic growth factor that stimulates the proliferation and colony formation of normal and transformed avian cells of the myeloid lineage. The sequence is that of Myelomonocytic growth factor from Gallus gallus (Chicken).